The following is a 380-amino-acid chain: Kappa-type opioid receptor (380 aa).

Topologically, residues 1 to 57 are extracellular; it reads MDSPIQIFRGEPGPTCAPSACLPPNSSAWFPGWAEPDSNGSAGSEDAQLEPAHISPA. Residues Asn-25 and Asn-39 are each glycosylated (N-linked (GlcNAc...) asparagine). The chain crosses the membrane as a helical span at residues 58–85; it reads IPVIITAVYSVVFVVGLVGNSLVMFVII. Over 86-95 the chain is Cytoplasmic; the sequence is RYTKMKTATN. The chain crosses the membrane as a helical span at residues 96 to 119; it reads IYIFNLALADALVTTTMPFQSTVY. At 120 to 132 the chain is on the extracellular side; sequence LMNSWPFGDVLCK. Cys-131 and Cys-210 are disulfide-bonded. A helical membrane pass occupies residues 133-154; that stretch reads IVISIDYYNMFTSIFTLTMMSV. Topologically, residues 155–173 are cytoplasmic; it reads DRYIAVCHPVKALDFRTPL. A helical membrane pass occupies residues 174–196; that stretch reads KAKIINICIWLLSSSVGISAIVL. At 197–222 the chain is on the extracellular side; the sequence is GGTKVREDVDVIECSLQFPDDDYSWW. The helical transmembrane segment at 223 to 247 threads the bilayer; the sequence is DLFMKICVFIFAFVIPVLIIIVCYT. Residues 248-274 are Cytoplasmic-facing; sequence LMILRLKSVRLLSGSREKDRNLRRITR. Residues 275 to 296 form a helical membrane-spanning segment; that stretch reads LVLVVVAVFVVCWTPIHIFILV. At 297–311 the chain is on the extracellular side; sequence EALGSTSHSTAALSS. The chain crosses the membrane as a helical span at residues 312-333; the sequence is YYFCIALGYTNSSLNPILYAFL. Over 334–380 the chain is Cytoplasmic; that stretch reads DENFKRCFRDFCFPLKMRMERQSTSRVRNTVQDPAYLRDIDGMNKPV. Cys-345 carries the S-palmitoyl cysteine lipid modification.

Belongs to the G-protein coupled receptor 1 family. Interacts with NHERF1. Interacts with GABARAPL1. Detected in brain and placenta.

Its subcellular location is the cell membrane. In terms of biological role, G-protein coupled opioid receptor that functions as a receptor for endogenous alpha-neoendorphins and dynorphins, but has low affinity for beta-endorphins. Also functions as a receptor for various synthetic opioids and for the psychoactive diterpene salvinorin A. Ligand binding causes a conformation change that triggers signaling via guanine nucleotide-binding proteins (G proteins) and modulates the activity of down-stream effectors, such as adenylate cyclase. Signaling leads to the inhibition of adenylate cyclase activity. Inhibits neurotransmitter release by reducing calcium ion currents and increasing potassium ion conductance. Plays a role in the perception of pain. Plays a role in mediating reduced physical activity upon treatment with synthetic opioids. Plays a role in the regulation of salivation in response to synthetic opioids. May play a role in arousal and regulation of autonomic and neuroendocrine functions. This Homo sapiens (Human) protein is Kappa-type opioid receptor (OPRK1).